We begin with the raw amino-acid sequence, 152 residues long: Transcriptional regulator MraZ (152 aa).

2 SpoVT-AbrB domains span residues 5 to 52 (TSAI…PLPE) and 81 to 124 (ASDC…HDTA).

It belongs to the MraZ family. In terms of assembly, forms oligomers.

It localises to the cytoplasm. The protein localises to the nucleoid. The polypeptide is Transcriptional regulator MraZ (Colwellia psychrerythraea (strain 34H / ATCC BAA-681) (Vibrio psychroerythus)).